The sequence spans 607 residues: DNA mismatch repair protein MutL (607 aa).

It belongs to the DNA mismatch repair MutL/HexB family.

This protein is involved in the repair of mismatches in DNA. It is required for dam-dependent methyl-directed DNA mismatch repair. May act as a 'molecular matchmaker', a protein that promotes the formation of a stable complex between two or more DNA-binding proteins in an ATP-dependent manner without itself being part of a final effector complex. The protein is DNA mismatch repair protein MutL of Anaeromyxobacter dehalogenans (strain 2CP-1 / ATCC BAA-258).